The primary structure comprises 446 residues: Thymidine phosphorylase (446 aa).

This sequence belongs to the thymidine/pyrimidine-nucleoside phosphorylase family. In terms of assembly, homodimer.

It catalyses the reaction thymidine + phosphate = 2-deoxy-alpha-D-ribose 1-phosphate + thymine. It functions in the pathway pyrimidine metabolism; dTMP biosynthesis via salvage pathway; dTMP from thymine: step 1/2. The enzymes which catalyze the reversible phosphorolysis of pyrimidine nucleosides are involved in the degradation of these compounds and in their utilization as carbon and energy sources, or in the rescue of pyrimidine bases for nucleotide synthesis. This Idiomarina loihiensis (strain ATCC BAA-735 / DSM 15497 / L2-TR) protein is Thymidine phosphorylase.